Consider the following 392-residue polypeptide: 1-deoxy-D-xylulose 5-phosphate reductoisomerase (392 aa).

NADPH contacts are provided by T14, G15, S16, I17, G40, Q43, and N126. K127 is a binding site for 1-deoxy-D-xylulose 5-phosphate. NADPH is bound at residue E128. D150 is a binding site for Mn(2+). Residues S151, E152, S176, and H199 each coordinate 1-deoxy-D-xylulose 5-phosphate. E152 provides a ligand contact to Mn(2+). An NADPH-binding site is contributed by G205. 1-deoxy-D-xylulose 5-phosphate-binding residues include S212, N217, K218, and E221. E221 provides a ligand contact to Mn(2+).

This sequence belongs to the DXR family. Mg(2+) is required as a cofactor. The cofactor is Mn(2+).

It catalyses the reaction 2-C-methyl-D-erythritol 4-phosphate + NADP(+) = 1-deoxy-D-xylulose 5-phosphate + NADPH + H(+). Its pathway is isoprenoid biosynthesis; isopentenyl diphosphate biosynthesis via DXP pathway; isopentenyl diphosphate from 1-deoxy-D-xylulose 5-phosphate: step 1/6. Catalyzes the NADPH-dependent rearrangement and reduction of 1-deoxy-D-xylulose-5-phosphate (DXP) to 2-C-methyl-D-erythritol 4-phosphate (MEP). The protein is 1-deoxy-D-xylulose 5-phosphate reductoisomerase of Corynebacterium glutamicum (strain ATCC 13032 / DSM 20300 / JCM 1318 / BCRC 11384 / CCUG 27702 / LMG 3730 / NBRC 12168 / NCIMB 10025 / NRRL B-2784 / 534).